The following is a 309-amino-acid chain: Short chain dehydrogenase MYCFIDRAFT_6125 (309 aa).

Isoleucine 43, arginine 67, aspartate 88, and arginine 150 together coordinate NADP(+). Serine 168 functions as the Proton donor in the catalytic mechanism. NADP(+)-binding residues include tyrosine 182, lysine 186, valine 215, and serine 217. Tyrosine 182 (proton acceptor) is an active-site residue. Lysine 186 (lowers pKa of active site Tyr) is an active-site residue.

It belongs to the short-chain dehydrogenases/reductases (SDR) family.

It functions in the pathway secondary metabolite biosynthesis. Short chain dehydrogenase; part of the gene cluster that mediates the biosynthesis of an emodin derivative that may be involved in black Sigatoka disease of banana. The pathway begins with the synthesis of atrochrysone thioester by the polyketide synthase PKS8-1. The atrochrysone carboxyl ACP thioesterase MYCFIDRAFT_190111 then breaks the thioester bond and releases the atrochrysone carboxylic acid from PKS8-1. The decarboxylase MYCFIDRAFT_34057 then catalyzes the concerted decarboxylation-elimination required to convert atochrysone carboxylic acid into emodin anthrone, which is further oxidized to emodin by the anthrone oxygenase MYCFIDRAFT_34418. The functions of the other tailoring enzymes as well as the final product of the cluster have still to be identified. In Pseudocercospora fijiensis (strain CIRAD86) (Black leaf streak disease fungus), this protein is Short chain dehydrogenase MYCFIDRAFT_6125.